A 527-amino-acid chain; its full sequence is Eukaryotic translation initiation factor 4B1 (527 aa).

2 disordered regions span residues methionine 1–valine 370 and phenylalanine 453–tryptophan 527. 2 stretches are compositionally biased toward low complexity: residues alanine 35 to serine 45 and glycine 74 to alanine 85. Basic and acidic residues-rich tracts occupy residues proline 102–glycine 155 and arginine 181–proline 194. Positions proline 196–glycine 203 match the Nuclear localization signal motif. The segment covering glycine 203 to phenylalanine 232 has biased composition (gly residues). Basic and acidic residues predominate over residues lysine 293–threonine 317. Low complexity predominate over residues arginine 319 to proline 336. Basic and acidic residues-rich tracts occupy residues glutamate 472 to arginine 485 and proline 496 to glycine 510. A compositionally biased stretch (low complexity) spans serine 518 to tryptophan 527.

This sequence belongs to the eIF-4 subunit B family. Homodimer. Nonspherical monomer. mRNA-discriminating component of initiation complexes. Phosphorylated.

Its subcellular location is the nucleus. In terms of biological role, promotes the eIF4F and eIF4A RNA-dependent ATP-hydrolysis activity with different efficiency depending on mRNAs, thus providing mRNA discrimination during initiation of translation. This Triticum aestivum (Wheat) protein is Eukaryotic translation initiation factor 4B1.